The sequence spans 252 residues: 3-dehydroquinate dehydratase (252 aa).

3-dehydroquinate contacts are provided by residues Ser21, 46 to 48 (EWR), and Arg82. The active-site Proton donor/acceptor is His143. Lys170 acts as the Schiff-base intermediate with substrate in catalysis. 3 residues coordinate 3-dehydroquinate: Arg213, Ser232, and Gln236.

This sequence belongs to the type-I 3-dehydroquinase family. Homodimer.

It carries out the reaction 3-dehydroquinate = 3-dehydroshikimate + H2O. The protein operates within metabolic intermediate biosynthesis; chorismate biosynthesis; chorismate from D-erythrose 4-phosphate and phosphoenolpyruvate: step 3/7. Functionally, involved in the third step of the chorismate pathway, which leads to the biosynthesis of aromatic amino acids. Catalyzes the cis-dehydration of 3-dehydroquinate (DHQ) and introduces the first double bond of the aromatic ring to yield 3-dehydroshikimate. The sequence is that of 3-dehydroquinate dehydratase from Escherichia coli O9:H4 (strain HS).